We begin with the raw amino-acid sequence, 239 residues long: MNIDIVISADHIDEKRLIKKTVIIIDILRATSVITTAINNGCKKVIPVLTVEEAKDIAKNSKEDIILGGERNALKIDGFNFSNSPLEYTKKYVEGKTVVLSTTNGTRAINNSFNAKTILISALINSKATAKAIDKLNEDLIIINSGTNGQFSIDDFICSGYLIDCLYNIRKDLELSDIAKTAHYIYTNNKDIESFVKKATHYSRLKSLNLEKDLEYCFQKDIIGVVPQYKDGYIIKSNI.

The protein belongs to the ComB family. Mg(2+) is required as a cofactor.

The enzyme catalyses (2R)-O-phospho-3-sulfolactate + H2O = (2R)-3-sulfolactate + phosphate. This chain is Probable 2-phosphosulfolactate phosphatase, found in Clostridium botulinum (strain Loch Maree / Type A3).